The sequence spans 142 residues: Large ribosomal subunit protein bL17 (142 aa).

It belongs to the bacterial ribosomal protein bL17 family. As to quaternary structure, part of the 50S ribosomal subunit. Contacts protein L32.

This chain is Large ribosomal subunit protein bL17, found in Bartonella henselae (strain ATCC 49882 / DSM 28221 / CCUG 30454 / Houston 1) (Rochalimaea henselae).